We begin with the raw amino-acid sequence, 274 residues long: 2,3,4,5-tetrahydropyridine-2,6-dicarboxylate N-succinyltransferase (274 aa).

Residues Arg104 and Asp141 each contribute to the substrate site.

It belongs to the transferase hexapeptide repeat family. Homotrimer.

It is found in the cytoplasm. The catalysed reaction is (S)-2,3,4,5-tetrahydrodipicolinate + succinyl-CoA + H2O = (S)-2-succinylamino-6-oxoheptanedioate + CoA. The protein operates within amino-acid biosynthesis; L-lysine biosynthesis via DAP pathway; LL-2,6-diaminopimelate from (S)-tetrahydrodipicolinate (succinylase route): step 1/3. The chain is 2,3,4,5-tetrahydropyridine-2,6-dicarboxylate N-succinyltransferase from Salmonella arizonae (strain ATCC BAA-731 / CDC346-86 / RSK2980).